The chain runs to 127 residues: Glycine cleavage system H protein (127 aa).

The Lipoyl-binding domain maps to 24–106 (VVTVGVTFHA…YGAGWFFKLK (83 aa)). N6-lipoyllysine is present on Lys65.

The protein belongs to the GcvH family. In terms of assembly, the glycine cleavage system is composed of four proteins: P, T, L and H. (R)-lipoate serves as cofactor.

Functionally, the glycine cleavage system catalyzes the degradation of glycine. The H protein shuttles the methylamine group of glycine from the P protein to the T protein. This Laribacter hongkongensis (strain HLHK9) protein is Glycine cleavage system H protein.